A 2036-amino-acid polypeptide reads, in one-letter code: Ral GTPase-activating protein subunit alpha-1 (2036 aa).

Disordered regions lie at residues 343–384 (LVSR…SSLC) and 476–497 (EEGE…RNSS). The segment covering 345–365 (SREESKNDNADKTDRTTEPEQ) has biased composition (basic and acidic residues). Composition is skewed to polar residues over residues 366 to 384 (SHSN…SSLC) and 486 to 497 (GTNTADHVRNSS). Phosphoserine occurs at positions 711 and 721. A disordered region spans residues 715-753 (SFSRGWSRDQPGQAPMRQRSATTTGSPGTEKARSIVRQK). Thr-754 carries the post-translational modification Phosphothreonine. At Ser-773 the chain carries Phosphoserine. Thr-778 bears the Phosphothreonine mark. Phosphoserine occurs at positions 797, 860, 861, and 864. Disordered regions lie at residues 849 to 910 (SGNA…SDSH) and 982 to 1009 (TITG…STLN). The segment covering 850 to 863 (GNASTMTRRGSSPG) has biased composition (polar residues). The span at 895–910 (SPASAGSSDLISSDSH) shows a compositional bias: low complexity. Over residues 983-1009 (ITGSESASPVHSPLGSRSQTPSPSTLN) the composition is skewed to polar residues. Residues Ser-986, Ser-990, Ser-994, and Ser-1000 each carry the phosphoserine modification. Residue Thr-1002 is modified to Phosphothreonine. 2 positions are modified to phosphoserine: Ser-1004 and Ser-1478. Residues 1327 to 2035 (FTNKTVAHVA…PYHHLPSDAD (709 aa)) are minimal domain that binds to TCF3/E12. Positions 1716–1744 (KQENDVINAILKQHTEEKEFVEKHFNDLN) form a coiled coil. Residues 1796–2004 (LRNLDSRQCR…EERARYLQTI (209 aa)) enclose the Rap-GAP domain.

As to quaternary structure, component of the heterodimeric RalGAP1 complex with RALGAPB. Heterodimerization is required for activity. Interacts with the HLH region of TCF3/isoform E12. As to expression, widely expressed.

Its subcellular location is the cytoplasm. It is found in the nucleus. Its function is as follows. Catalytic subunit of the heterodimeric RalGAP1 complex which acts as a GTPase activator for the Ras-like small GTPases RALA and RALB. The polypeptide is Ral GTPase-activating protein subunit alpha-1 (RALGAPA1) (Homo sapiens (Human)).